We begin with the raw amino-acid sequence, 395 residues long: Phosphoglycerate kinase (395 aa).

Substrate is bound by residues 20–22 (DFN), Arg-36, 59–62 (HLGR), Arg-120, and Arg-157. ATP-binding positions include Lys-208, Gly-296, Glu-327, and 353 to 356 (GGDT).

Belongs to the phosphoglycerate kinase family. As to quaternary structure, monomer.

Its subcellular location is the cytoplasm. It carries out the reaction (2R)-3-phosphoglycerate + ATP = (2R)-3-phospho-glyceroyl phosphate + ADP. It functions in the pathway carbohydrate degradation; glycolysis; pyruvate from D-glyceraldehyde 3-phosphate: step 2/5. The sequence is that of Phosphoglycerate kinase from Tropheryma whipplei (strain Twist) (Whipple's bacillus).